The sequence spans 483 residues: Glycogen synthase (483 aa).

ADP-alpha-D-glucose is bound at residue Lys-18.

This sequence belongs to the glycosyltransferase 1 family. Bacterial/plant glycogen synthase subfamily.

The catalysed reaction is [(1-&gt;4)-alpha-D-glucosyl](n) + ADP-alpha-D-glucose = [(1-&gt;4)-alpha-D-glucosyl](n+1) + ADP + H(+). The protein operates within glycan biosynthesis; glycogen biosynthesis. In terms of biological role, synthesizes alpha-1,4-glucan chains using ADP-glucose. The sequence is that of Glycogen synthase from Rhodopseudomonas palustris (strain ATCC BAA-98 / CGA009).